Here is a 392-residue protein sequence, read N- to C-terminus: Acetyl-CoA acetyltransferase (392 aa).

Cysteine 89 functions as the Acyl-thioester intermediate in the catalytic mechanism. Active-site proton acceptor residues include histidine 348 and cysteine 378.

It belongs to the thiolase-like superfamily. Thiolase family. As to quaternary structure, homotetramer.

Its subcellular location is the cytoplasm. The catalysed reaction is 2 acetyl-CoA = acetoacetyl-CoA + CoA. It functions in the pathway biopolymer metabolism; poly-(R)-3-hydroxybutanoate biosynthesis. The protein operates within metabolic intermediate biosynthesis; (R)-mevalonate biosynthesis; (R)-mevalonate from acetyl-CoA: step 1/3. This Shinella zoogloeoides (Crabtreella saccharophila) protein is Acetyl-CoA acetyltransferase.